Here is a 359-residue protein sequence, read N- to C-terminus: 3-dehydroquinate synthase (359 aa).

Residues 69 to 74, 103 to 107, 127 to 128, Lys-139, Lys-148, and 166 to 169 contribute to the NAD(+) site; these read SGESSK, GVVGD, TT, and TLST. Residues Glu-181, His-242, and His-259 each coordinate Zn(2+).

It belongs to the sugar phosphate cyclases superfamily. Dehydroquinate synthase family. Requires NAD(+) as cofactor. Co(2+) serves as cofactor. The cofactor is Zn(2+).

It localises to the cytoplasm. It catalyses the reaction 7-phospho-2-dehydro-3-deoxy-D-arabino-heptonate = 3-dehydroquinate + phosphate. The protein operates within metabolic intermediate biosynthesis; chorismate biosynthesis; chorismate from D-erythrose 4-phosphate and phosphoenolpyruvate: step 2/7. Its function is as follows. Catalyzes the conversion of 3-deoxy-D-arabino-heptulosonate 7-phosphate (DAHP) to dehydroquinate (DHQ). In Oceanobacillus iheyensis (strain DSM 14371 / CIP 107618 / JCM 11309 / KCTC 3954 / HTE831), this protein is 3-dehydroquinate synthase.